The sequence spans 195 residues: Molybdenum cofactor guanylyltransferase (195 aa).

Residues 12–14 (LAG), K25, N53, D70, and D100 contribute to the GTP site. Position 100 (D100) interacts with Mg(2+).

It belongs to the MobA family. As to quaternary structure, monomer. The cofactor is Mg(2+).

The protein localises to the cytoplasm. The catalysed reaction is Mo-molybdopterin + GTP + H(+) = Mo-molybdopterin guanine dinucleotide + diphosphate. Transfers a GMP moiety from GTP to Mo-molybdopterin (Mo-MPT) cofactor (Moco or molybdenum cofactor) to form Mo-molybdopterin guanine dinucleotide (Mo-MGD) cofactor. The protein is Molybdenum cofactor guanylyltransferase of Vibrio vulnificus (strain YJ016).